The primary structure comprises 608 residues: Chaperone protein HtpG (608 aa).

The a; substrate-binding stretch occupies residues M1–R332. Residues E333–Q536 form a b region. Residues L537–S608 form a c region.

This sequence belongs to the heat shock protein 90 family. In terms of assembly, homodimer.

It is found in the cytoplasm. Functionally, molecular chaperone. Has ATPase activity. This chain is Chaperone protein HtpG, found in Campylobacter jejuni subsp. doylei (strain ATCC BAA-1458 / RM4099 / 269.97).